An 828-amino-acid chain; its full sequence is Cadherin-22 (828 aa).

An N-terminal signal peptide occupies residues Met-1–Gly-34. Over Leu-36 to Pro-624 the chain is Extracellular. Cadherin domains are found at residues Trp-64–Phe-168, Leu-169–Phe-277, Pro-278–Phe-394, Arg-395–Glu-498, and Leu-499–Phe-616. Asn-162 carries an N-linked (GlcNAc...) asparagine glycan. 2 N-linked (GlcNAc...) asparagine glycosylation sites follow: Asn-466 and Asn-612. The helical transmembrane segment at Gly-625–Leu-645 threads the bilayer. Over Thr-646–Ser-828 the chain is Cytoplasmic. The segment covering Gly-702–Gly-719 has biased composition (gly residues). A disordered region spans residues Gly-702–Ser-745.

Its subcellular location is the cell membrane. Cadherins are calcium-dependent cell adhesion proteins. They preferentially interact with themselves in a homophilic manner in connecting cells; cadherins may thus contribute to the sorting of heterogeneous cell types. PB-cadherins may have a role in the morphological organization of pituitary gland and brain tissues. The protein is Cadherin-22 (CDH22) of Homo sapiens (Human).